The chain runs to 232 residues: Small ribosomal subunit protein uS3 (232 aa).

The KH type-2 domain occupies 39-107 (IRAFLKKKLY…EVNVNIKEER (69 aa)). The disordered stretch occupies residues 212–232 (VQPEKTEDDAPKKTRRPRRGK). Positions 213–223 (QPEKTEDDAPK) are enriched in basic and acidic residues.

This sequence belongs to the universal ribosomal protein uS3 family. As to quaternary structure, part of the 30S ribosomal subunit. Forms a tight complex with proteins S10 and S14.

Its function is as follows. Binds the lower part of the 30S subunit head. Binds mRNA in the 70S ribosome, positioning it for translation. This chain is Small ribosomal subunit protein uS3, found in Campylobacter curvus (strain 525.92).